A 546-amino-acid chain; its full sequence is DNA ligase (546 aa).

E244 provides a ligand contact to ATP. K246 acts as the N6-AMP-lysine intermediate in catalysis. ATP is bound by residues R251, R266, E295, F334, R405, and K411.

It belongs to the ATP-dependent DNA ligase family. Mg(2+) serves as cofactor.

The enzyme catalyses ATP + (deoxyribonucleotide)n-3'-hydroxyl + 5'-phospho-(deoxyribonucleotide)m = (deoxyribonucleotide)n+m + AMP + diphosphate.. Its function is as follows. DNA ligase that seals nicks in double-stranded DNA during DNA replication, DNA recombination and DNA repair. This chain is DNA ligase, found in Methanocorpusculum labreanum (strain ATCC 43576 / DSM 4855 / Z).